A 76-amino-acid polypeptide reads, in one-letter code: Alpha/kappa-conotoxin pl14a (76 aa).

A signal peptide spans 1–24; it reads MPSVRSVTCCCLLWMMFSVQLVTP. A propeptide spanning residues 25–39 is cleaved from the precursor; sequence GSPGTAQLSGHRTAR. Intrachain disulfides connect Cys-46/Cys-61 and Cys-50/Cys-63. Arg-64 is subject to Arginine amide. The propeptide occupies 65 to 76; sequence GKRDAVSSSMAV.

This sequence belongs to the conotoxin J superfamily. As to expression, expressed by the venom duct.

The protein localises to the secreted. Its function is as follows. Highly inhibits both nicotinic acetylcholine receptors (neuronal (IC(50)=8.7 uM for alpha-3/beta-4) and muscular (IC(50)=0.54 uM for alpha-1-beta-1-epsilon-delta (CHRNA1-CHRNB1-CHRND-CHRNE)) subtypes) and the voltage-gated potassium channel Kv1.6/KCNA6 subtype (IC(50)=1.59 uM). The sequence is that of Alpha/kappa-conotoxin pl14a from Conus planorbis (Planorbis cone).